The primary structure comprises 747 residues: RNA polymerase II assembly factor rtp1 (747 aa).

7 HEAT repeats span residues 37–75 (NYFL…LLGV), 103–141 (QIYN…NCHE), 320–358 (DIIR…VCGT), 381–418 (SQLA…NVDS), 459–485 (EENE…LDLE), 486–523 (NPIS…SKDD), and 557–594 (INPV…KYDD).

Belongs to the Tango6 family. Interacts with RNA polymerase II subunits. Interacts with nuclear pore complex subunits.

The protein resides in the cytoplasm. It localises to the nucleus. Required for the cytoplasmic assembly and the nuclear import of RNA polymerase II. This is RNA polymerase II assembly factor rtp1 from Schizosaccharomyces pombe (strain 972 / ATCC 24843) (Fission yeast).